Reading from the N-terminus, the 159-residue chain is FCS-Like Zinc finger 2 (159 aa).

The FLZ-type zinc finger occupies 75 to 119 (HFLDSCFLCKKRLGDNRDIFMYRGDTPFCSEECREEQIERDEAKE). Over residues 113-122 (ERDEAKEKKQ) the composition is skewed to basic and acidic residues. Positions 113 to 159 (ERDEAKEKKQSLSTSVKAMRRNEKRSSSSSPTRSRNYAFRTGTVAAA) are disordered.

Belongs to the FLZ family. In terms of assembly, interacts with KIN10 and KIN11 via its FLZ-type zinc finger domain. Interacts with KINB1, KINB2, KINB3 and SNF4 via its N-terminal part. Forms heterodimer with FLZ7, FLZ10, FLZ11, FLZ12, FLZ15, FLZ17 and FLZ18 in vitro.

May act as an adapter to facilitate the interaction of SnRK1 complex with effector proteins, conferring tissue- and stimulus-type specific differences in the SnRK1 regulation pathway. The sequence is that of FCS-Like Zinc finger 2 from Arabidopsis thaliana (Mouse-ear cress).